The following is a 292-amino-acid chain: Phosphoribosylaminoimidazole-succinocarboxamide synthase (292 aa).

It belongs to the SAICAR synthetase family.

It catalyses the reaction 5-amino-1-(5-phospho-D-ribosyl)imidazole-4-carboxylate + L-aspartate + ATP = (2S)-2-[5-amino-1-(5-phospho-beta-D-ribosyl)imidazole-4-carboxamido]succinate + ADP + phosphate + 2 H(+). Its pathway is purine metabolism; IMP biosynthesis via de novo pathway; 5-amino-1-(5-phospho-D-ribosyl)imidazole-4-carboxamide from 5-amino-1-(5-phospho-D-ribosyl)imidazole-4-carboxylate: step 1/2. This chain is Phosphoribosylaminoimidazole-succinocarboxamide synthase, found in Thermodesulfovibrio yellowstonii (strain ATCC 51303 / DSM 11347 / YP87).